The sequence spans 688 residues: Potassium-transporting ATPase ATP-binding subunit (688 aa).

A run of 4 helical transmembrane segments spans residues 34–54 (PVMF…LDIL), 62–82 (AMFT…ANMA), 219–239 (VALT…TATL), and 260–280 (VLVA…LSAI). The active-site 4-aspartylphosphate intermediate is Asp-313. ATP-binding positions include Asp-350, Glu-354, 383-390 (FSAQTRMS), and Lys-401. Residues Asp-524 and Asp-528 each contribute to the Mg(2+) site. A run of 3 helical transmembrane segments spans residues 594–614 (FAII…LNIM), 622–642 (AILS…PLAL), and 662–682 (IYGL…DLLL).

This sequence belongs to the cation transport ATPase (P-type) (TC 3.A.3) family. Type IA subfamily. The system is composed of three essential subunits: KdpA, KdpB and KdpC.

The protein resides in the cell inner membrane. The catalysed reaction is K(+)(out) + ATP + H2O = K(+)(in) + ADP + phosphate + H(+). Its function is as follows. Part of the high-affinity ATP-driven potassium transport (or Kdp) system, which catalyzes the hydrolysis of ATP coupled with the electrogenic transport of potassium into the cytoplasm. This subunit is responsible for energy coupling to the transport system and for the release of the potassium ions to the cytoplasm. This Yersinia pestis bv. Antiqua (strain Antiqua) protein is Potassium-transporting ATPase ATP-binding subunit.